A 321-amino-acid polypeptide reads, in one-letter code: Ribosomal RNA small subunit methyltransferase H (321 aa).

Residues 29–31 (GGH), Asp48, Tyr76, Asp97, and Gln104 each bind S-adenosyl-L-methionine. Positions 277-321 (LTRGAEPASETEKAENPRAASVRLRAVERTAPNPDHTRKPTGGAS) are disordered.

The protein belongs to the methyltransferase superfamily. RsmH family.

Its subcellular location is the cytoplasm. The catalysed reaction is cytidine(1402) in 16S rRNA + S-adenosyl-L-methionine = N(4)-methylcytidine(1402) in 16S rRNA + S-adenosyl-L-homocysteine + H(+). Functionally, specifically methylates the N4 position of cytidine in position 1402 (C1402) of 16S rRNA. This is Ribosomal RNA small subunit methyltransferase H from Frankia casuarinae (strain DSM 45818 / CECT 9043 / HFP020203 / CcI3).